A 144-amino-acid polypeptide reads, in one-letter code: 3-hydroxyacyl-[acyl-carrier-protein] dehydratase FabZ (144 aa).

H47 is a catalytic residue.

The protein belongs to the thioester dehydratase family. FabZ subfamily.

The protein resides in the cytoplasm. It catalyses the reaction a (3R)-hydroxyacyl-[ACP] = a (2E)-enoyl-[ACP] + H2O. Functionally, involved in unsaturated fatty acids biosynthesis. Catalyzes the dehydration of short chain beta-hydroxyacyl-ACPs and long chain saturated and unsaturated beta-hydroxyacyl-ACPs. The sequence is that of 3-hydroxyacyl-[acyl-carrier-protein] dehydratase FabZ from Nitrosomonas eutropha (strain DSM 101675 / C91 / Nm57).